The primary structure comprises 305 residues: MNDVSSAPSESLTEYFPEDLLHVVRENQPLRETLWLGIGGPARFLAEPVEIDQIEKLYTAAREKQLALRVLGQGSNVLVREAGFDGLVIKLSAPATSGLEIQGQKLVAGAGAKLTHAVIKTVGEGLGGLEHLVGIPGSIGAAVVGNVSAEGRDIGSVVESIEIIDEEGKRKTLTGDEAGFAHRQSTLMGTVVLSVTFNLEPKDVSALTKRMQKLWIHRGQRRPSESNRIAMPFIDPDSISACELINSTGLAGIREGDVSLDSAAPHYLIAHENATSDQCVKLIGRVREQVLMQTGIDLQLNLQIW.

Residues Gly-37–Lys-202 form the FAD-binding PCMH-type domain. Arg-183 is an active-site residue.

This sequence belongs to the MurB family. Requires FAD as cofactor.

It localises to the cytoplasm. It carries out the reaction UDP-N-acetyl-alpha-D-muramate + NADP(+) = UDP-N-acetyl-3-O-(1-carboxyvinyl)-alpha-D-glucosamine + NADPH + H(+). It participates in cell wall biogenesis; peptidoglycan biosynthesis. Its function is as follows. Cell wall formation. The protein is UDP-N-acetylenolpyruvoylglucosamine reductase of Rhodopirellula baltica (strain DSM 10527 / NCIMB 13988 / SH1).